The sequence spans 330 residues: Ribosomal RNA small subunit methyltransferase C (330 aa).

This sequence belongs to the methyltransferase superfamily. RsmC family. As to quaternary structure, monomer.

Its subcellular location is the cytoplasm. It carries out the reaction guanosine(1207) in 16S rRNA + S-adenosyl-L-methionine = N(2)-methylguanosine(1207) in 16S rRNA + S-adenosyl-L-homocysteine + H(+). Its function is as follows. Specifically methylates the guanine in position 1207 of 16S rRNA in the 30S particle. The sequence is that of Ribosomal RNA small subunit methyltransferase C from Haemophilus influenzae (strain ATCC 51907 / DSM 11121 / KW20 / Rd).